We begin with the raw amino-acid sequence, 347 residues long: RNA 3'-terminal phosphate cyclase (347 aa).

Residues Q109 and 290 to 294 (YLADQ) contribute to the ATP site. The active-site Tele-AMP-histidine intermediate is H315.

Belongs to the RNA 3'-terminal cyclase family. Type 1 subfamily.

The protein localises to the cytoplasm. It catalyses the reaction a 3'-end 3'-phospho-ribonucleotide-RNA + ATP = a 3'-end 2',3'-cyclophospho-ribonucleotide-RNA + AMP + diphosphate. Catalyzes the conversion of 3'-phosphate to a 2',3'-cyclic phosphodiester at the end of RNA. The mechanism of action of the enzyme occurs in 3 steps: (A) adenylation of the enzyme by ATP; (B) transfer of adenylate to an RNA-N3'P to produce RNA-N3'PP5'A; (C) and attack of the adjacent 2'-hydroxyl on the 3'-phosphorus in the diester linkage to produce the cyclic end product. The biological role of this enzyme is unknown but it is likely to function in some aspects of cellular RNA processing. The protein is RNA 3'-terminal phosphate cyclase of Ralstonia nicotianae (strain ATCC BAA-1114 / GMI1000) (Ralstonia solanacearum).